The sequence spans 311 residues: tRNA dimethylallyltransferase (311 aa).

13–20 (GPTASGKT) contributes to the ATP binding site. A substrate-binding site is contributed by 15–20 (TASGKT). Interaction with substrate tRNA regions lie at residues 38 to 41 (DSMQ) and 166 to 170 (QRVLR).

It belongs to the IPP transferase family. As to quaternary structure, monomer. Requires Mg(2+) as cofactor.

The enzyme catalyses adenosine(37) in tRNA + dimethylallyl diphosphate = N(6)-dimethylallyladenosine(37) in tRNA + diphosphate. Its function is as follows. Catalyzes the transfer of a dimethylallyl group onto the adenine at position 37 in tRNAs that read codons beginning with uridine, leading to the formation of N6-(dimethylallyl)adenosine (i(6)A). This chain is tRNA dimethylallyltransferase, found in Staphylococcus aureus (strain Mu3 / ATCC 700698).